A 129-amino-acid chain; its full sequence is Small ribosomal subunit protein uS11 (129 aa).

It belongs to the universal ribosomal protein uS11 family. As to quaternary structure, part of the 30S ribosomal subunit. Interacts with proteins S7 and S18. Binds to IF-3.

In terms of biological role, located on the platform of the 30S subunit, it bridges several disparate RNA helices of the 16S rRNA. Forms part of the Shine-Dalgarno cleft in the 70S ribosome. The chain is Small ribosomal subunit protein uS11 from Haemophilus ducreyi (strain 35000HP / ATCC 700724).